Reading from the N-terminus, the 217-residue chain is Probable GTP-binding protein EngB (217 aa).

Residues 24 to 207 form the EngB-type G domain; the sequence is SQPEICFAGR…HELIESWLIP (184 aa). Residues 32-39, 59-63, 81-84, 148-151, and 185-188 contribute to the GTP site; these read GRSNAGKS, GRTQH, DLPG, TKCD, and LFSA. Residues Ser-39 and Thr-61 each contribute to the Mg(2+) site.

The protein belongs to the TRAFAC class TrmE-Era-EngA-EngB-Septin-like GTPase superfamily. EngB GTPase family. The cofactor is Mg(2+).

Functionally, necessary for normal cell division and for the maintenance of normal septation. This chain is Probable GTP-binding protein EngB, found in Paraburkholderia phytofirmans (strain DSM 17436 / LMG 22146 / PsJN) (Burkholderia phytofirmans).